A 439-amino-acid chain; its full sequence is Oocyte zinc finger protein XlCOF28 (439 aa).

C2H2-type zinc fingers lie at residues 6 to 28 (YECT…QRTH), 34 to 56 (FKCT…KKCH), 62 to 84 (YMCT…IRTH), 90 to 112 (FTCT…LRIH), 118 to 140 (HKCN…QRTH), 146 to 168 (FQCT…LRIH), 174 to 196 (YKCS…QRTH), 202 to 224 (FQCS…ERTH), and 230 to 252 (YKCS…QKTH). 2 disordered regions span residues 246–275 (KLHQ…APKT) and 285–304 (AGLE…ESPE). 4 consecutive C2H2-type zinc fingers follow at residues 333 to 355 (HKCT…QRTH), 361 to 383 (FKCS…RKIH), 389 to 411 (YTCA…RRTH), and 417 to 439 (YICA…QRIH).

The protein belongs to the krueppel C2H2-type zinc-finger protein family.

It is found in the nucleus. Its function is as follows. May be involved in transcriptional regulation. In Xenopus laevis (African clawed frog), this protein is Oocyte zinc finger protein XlCOF28.